A 178-amino-acid chain; its full sequence is CDP-archaeol synthase (178 aa).

5 helical membrane passes run 3–23 (LLLL…ANAV), 56–76 (FFGI…VILY), 91–111 (IILG…GSFI), 123–143 (APLL…YPLY), and 149–169 (LMVI…IIAY).

The protein belongs to the CDP-archaeol synthase family. It depends on Mg(2+) as a cofactor.

The protein localises to the cell membrane. The catalysed reaction is 2,3-bis-O-(geranylgeranyl)-sn-glycerol 1-phosphate + CTP + H(+) = CDP-2,3-bis-O-(geranylgeranyl)-sn-glycerol + diphosphate. It functions in the pathway membrane lipid metabolism; glycerophospholipid metabolism. In terms of biological role, catalyzes the formation of CDP-2,3-bis-(O-geranylgeranyl)-sn-glycerol (CDP-archaeol) from 2,3-bis-(O-geranylgeranyl)-sn-glycerol 1-phosphate (DGGGP) and CTP. This reaction is the third ether-bond-formation step in the biosynthesis of archaeal membrane lipids. The sequence is that of CDP-archaeol synthase from Methanococcus maripaludis (strain C7 / ATCC BAA-1331).